The primary structure comprises 142 residues: Hemoglobin subunit zeta (142 aa).

An N-acetylserine modification is found at S2. One can recognise a Globin domain in the interval 2–142 (SLMKNERAII…LSSILTEKYR (141 aa)). A Phosphothreonine modification is found at T29. S53 carries the phosphoserine modification. H59 contacts heme b. Position 73 is a phosphoserine (S73). H88 is a binding site for heme b.

This sequence belongs to the globin family. Heterotetramer of two zeta chains and beta-type chains.

Its function is as follows. The zeta chain is an alpha-type chain of mammalian embryonic hemoglobin. This chain is Hemoglobin subunit zeta (Hbz), found in Mus musculus (Mouse).